Here is a 535-residue protein sequence, read N- to C-terminus: Peptide chain release factor 3 (535 aa).

One can recognise a tr-type G domain in the interval 8 to 278 (ARRRTFAIIS…VDQAPAPGPR (271 aa)). Residues 17–24 (SHPDAGKT), 85–89 (DTPGH), and 139–142 (NKLD) contribute to the GTP site.

The protein belongs to the TRAFAC class translation factor GTPase superfamily. Classic translation factor GTPase family. PrfC subfamily.

The protein resides in the cytoplasm. Increases the formation of ribosomal termination complexes and stimulates activities of RF-1 and RF-2. It binds guanine nucleotides and has strong preference for UGA stop codons. It may interact directly with the ribosome. The stimulation of RF-1 and RF-2 is significantly reduced by GTP and GDP, but not by GMP. The sequence is that of Peptide chain release factor 3 from Bordetella bronchiseptica (strain ATCC BAA-588 / NCTC 13252 / RB50) (Alcaligenes bronchisepticus).